The chain runs to 122 residues: Large ribosomal subunit protein uL14 (122 aa).

This sequence belongs to the universal ribosomal protein uL14 family. As to quaternary structure, part of the 50S ribosomal subunit. Forms a cluster with proteins L3 and L19. In the 70S ribosome, L14 and L19 interact and together make contacts with the 16S rRNA in bridges B5 and B8.

Its function is as follows. Binds to 23S rRNA. Forms part of two intersubunit bridges in the 70S ribosome. This is Large ribosomal subunit protein uL14 from Bordetella avium (strain 197N).